We begin with the raw amino-acid sequence, 668 residues long: NADH-ubiquinone oxidoreductase chain 5 (668 aa).

A run of 18 helical transmembrane segments spans residues Met1–His21, Ile31–Leu51, Leu81–Met101, Thr111–Asp131, Phe133–Phe153, Leu178–Phe198, Leu211–Val231, Thr251–Leu271, Ile283–Ile303, Val311–Asn331, Leu339–Gly359, Leu375–Phe395, Ala421–Leu441, Thr462–Thr482, Leu519–Leu539, Phe566–Met586, Ile629–Leu649, and Tyr650–Lys668.

It belongs to the complex I subunit 5 family.

It localises to the mitochondrion inner membrane. It catalyses the reaction a ubiquinone + NADH + 5 H(+)(in) = a ubiquinol + NAD(+) + 4 H(+)(out). Core subunit of the mitochondrial membrane respiratory chain NADH dehydrogenase (Complex I) that is believed to belong to the minimal assembly required for catalysis. Complex I functions in the transfer of electrons from NADH to the respiratory chain. The immediate electron acceptor for the enzyme is believed to be ubiquinone. This is NADH-ubiquinone oxidoreductase chain 5 (nad5) from Dictyostelium citrinum (Slime mold).